We begin with the raw amino-acid sequence, 116 residues long: MMIEVLKSKLHCVRVTEANLNYMGSITIDEDLMDAANMIAGEKVHIVDNNNGERFETYIIKGERGSGCICLNGAAARKVQVGDIVIIMSYAMMDFEEAKSFKPTVVFPDSAMNKIV.

Ser25 serves as the catalytic Schiff-base intermediate with substrate; via pyruvic acid. Residue Ser25 is modified to Pyruvic acid (Ser). Substrate is bound at residue Thr57. The active-site Proton donor is the Tyr58. Gly73–Ala75 contacts substrate.

This sequence belongs to the PanD family. Heterooctamer of four alpha and four beta subunits. Requires pyruvate as cofactor. Is synthesized initially as an inactive proenzyme, which is activated by self-cleavage at a specific serine bond to produce a beta-subunit with a hydroxyl group at its C-terminus and an alpha-subunit with a pyruvoyl group at its N-terminus.

It is found in the cytoplasm. It carries out the reaction L-aspartate + H(+) = beta-alanine + CO2. The protein operates within cofactor biosynthesis; (R)-pantothenate biosynthesis; beta-alanine from L-aspartate: step 1/1. In terms of biological role, catalyzes the pyruvoyl-dependent decarboxylation of aspartate to produce beta-alanine. In Phocaeicola vulgatus (strain ATCC 8482 / DSM 1447 / JCM 5826 / CCUG 4940 / NBRC 14291 / NCTC 11154) (Bacteroides vulgatus), this protein is Aspartate 1-decarboxylase.